A 279-amino-acid polypeptide reads, in one-letter code: Shikimate dehydrogenase (NADP(+)) (279 aa).

Residues 17 to 19 (SQS) and Thr64 each bind shikimate. Catalysis depends on Lys68, which acts as the Proton acceptor. Shikimate-binding residues include Asn89 and Asp105. NADP(+)-binding positions include 130–134 (GAGGA) and Leu218. A shikimate-binding site is contributed by Tyr220. An NADP(+)-binding site is contributed by Gly242.

Belongs to the shikimate dehydrogenase family. In terms of assembly, homodimer.

It catalyses the reaction shikimate + NADP(+) = 3-dehydroshikimate + NADPH + H(+). The protein operates within metabolic intermediate biosynthesis; chorismate biosynthesis; chorismate from D-erythrose 4-phosphate and phosphoenolpyruvate: step 4/7. Functionally, involved in the biosynthesis of the chorismate, which leads to the biosynthesis of aromatic amino acids. Catalyzes the reversible NADPH linked reduction of 3-dehydroshikimate (DHSA) to yield shikimate (SA). The chain is Shikimate dehydrogenase (NADP(+)) from Methylococcus capsulatus (strain ATCC 33009 / NCIMB 11132 / Bath).